Consider the following 310-residue polypeptide: MKVAVIGAAGGIGQALALLLKNRLPAGSDLALYDIAPVTPGVAADLSHIPTPVSIKGYAGEDPTPALEGADVVLISAGVARKPGMDRADLFNVNAGIVKSLAERIAVVCPNACIGIITNPVNTTVPIAAEVLKKAGVYDKRKLFGVTTLDVIRSETFVAELKGQDPGEVRVPVIGGHSGVTILPLLSQVEGVEFSDEEIAALTKRIQNAGTEVVEAKAGGGSATLSMGQAACRFGLALVKALQGEEVIEYAYVEGNGEHASFFAQPVKLGKEGVEEILPYGELSDFEKAALDGMLETLNGDIQIGVDFVK.

NAD(+) is bound by residues 7–13 (GAAGGIG) and Asp34. Substrate-binding residues include Arg81 and Arg87. Residues Asn94 and 117–119 (ITN) contribute to the NAD(+) site. Substrate is bound by residues Asn119 and Arg153. The active-site Proton acceptor is the His177. Met227 provides a ligand contact to NAD(+).

It belongs to the LDH/MDH superfamily. MDH type 1 family. As to quaternary structure, homodimer.

It carries out the reaction (S)-malate + NAD(+) = oxaloacetate + NADH + H(+). Catalyzes the reversible oxidation of malate to oxaloacetate. This chain is Malate dehydrogenase, found in Vibrio vulnificus (strain YJ016).